A 400-amino-acid polypeptide reads, in one-letter code: Na(+)/H(+) antiporter NhaA (400 aa).

A run of 12 helical transmembrane segments spans residues 26–46, 71–91, 107–127, 137–157, 166–186, 189–209, 212–232, 233–253, 273–293, 299–319, 340–360, and 373–393; these read AGGILLLFSAVVAMLLANSPL, LIHWINDGFMAVFFVLVGMEV, IFPAIAAIGGMVIPAVVYWFI, GWAIPMATDIAFALGIMALLS, IFLLALAIIDDLGAIVVIALF, HGLSVQALIFSAVAIIALILL, FKVSALCAYMVVGAILWASVL, KSGVHATLAGVIIGFSIPLKG, FVILPLFAFANAGVSFAGIDV, PLLLAIASGLIIGKPVGIFGF, IFAVAVLCGIGFTMSMFLASL, and LSRLGILLGSTVSAILGYLFL.

This sequence belongs to the NhaA Na(+)/H(+) (TC 2.A.33) antiporter family.

Its subcellular location is the cell inner membrane. It carries out the reaction Na(+)(in) + 2 H(+)(out) = Na(+)(out) + 2 H(+)(in). Its function is as follows. Na(+)/H(+) antiporter that extrudes sodium in exchange for external protons. This is Na(+)/H(+) antiporter NhaA from Haemophilus influenzae (strain PittGG).